The sequence spans 1030 residues: Peroxisomal ATPase PEX6 (1030 aa).

An AAA-cassette D1 region spans residues 478 to 683; that stretch reads VLLHSTTNNV…VETARMTATA (206 aa). The interval 767 to 956 is AAA-cassette D2; that stretch reads GILFYGPPGT…CSDAMLNAMS (190 aa). ATP is bound at residue 772-779; sequence GPPGTGKT.

This sequence belongs to the AAA ATPase family. In terms of assembly, interacts with PEX1; forming the PEX1-PEX6 AAA ATPase complex, which is composed of a heterohexamer formed by a trimer of PEX1-PEX6 dimers. Interacts with PEX15; anchors PEX1-PEX6 heterooligomers to the peroxisomal membrane and mediates their association with the peroxisomal importomer. Interacts with UBP15.

The protein resides in the cytoplasm. Its subcellular location is the cytosol. The protein localises to the peroxisome membrane. The enzyme catalyses ATP + H2O = ADP + phosphate + H(+). Functionally, component of the PEX1-PEX6 AAA ATPase complex, a protein dislocase complex that mediates the ATP-dependent extraction of the PEX5 receptor from peroxisomal membranes, an essential step for PEX5 recycling. Specifically recognizes PEX5 monoubiquitinated at 'Cys-6', and pulls it out of the peroxisome lumen through the PEX2-PEX10-PEX12 retrotranslocation channel. Extraction by the PEX1-PEX6 AAA ATPase complex is accompanied by unfolding of the TPR repeats and release of bound cargo from PEX5. The chain is Peroxisomal ATPase PEX6 from Saccharomyces cerevisiae (strain ATCC 204508 / S288c) (Baker's yeast).